The chain runs to 630 residues: 1,4-alpha-glucan branching enzyme GlgB (630 aa).

Asp308 serves as the catalytic Nucleophile. Glu361 functions as the Proton donor in the catalytic mechanism.

Belongs to the glycosyl hydrolase 13 family. GlgB subfamily. As to quaternary structure, monomer.

The enzyme catalyses Transfers a segment of a (1-&gt;4)-alpha-D-glucan chain to a primary hydroxy group in a similar glucan chain.. It participates in glycan biosynthesis; glycogen biosynthesis. In terms of biological role, catalyzes the formation of the alpha-1,6-glucosidic linkages in glycogen by scission of a 1,4-alpha-linked oligosaccharide from growing alpha-1,4-glucan chains and the subsequent attachment of the oligosaccharide to the alpha-1,6 position. This is 1,4-alpha-glucan branching enzyme GlgB from Halothermothrix orenii (strain H 168 / OCM 544 / DSM 9562).